Consider the following 138-residue polypeptide: Small ribosomal subunit protein uS11c (138 aa).

Residues 1-25 (MAKSIPRTGSRRNVRSGSRKSTRRI) form a disordered region. A compositionally biased stretch (basic residues) spans 9-25 (GSRRNVRSGSRKSTRRI).

Belongs to the universal ribosomal protein uS11 family. As to quaternary structure, part of the 30S ribosomal subunit.

It is found in the plastid. The protein localises to the chloroplast. In Eucalyptus globulus subsp. globulus (Tasmanian blue gum), this protein is Small ribosomal subunit protein uS11c.